The following is a 334-amino-acid chain: Isopentenyl-diphosphate delta-isomerase (334 aa).

Residue arginine 5–lysine 6 participates in substrate binding. FMN is bound by residues alanine 60–threonine 62, serine 90, and asparagine 117. Residue glutamine 147 coordinates substrate. Glutamate 148 lines the Mg(2+) pocket. Residues lysine 179, serine 204, threonine 209, glycine 253–arginine 255, and serine 274–arginine 275 each bind FMN.

The protein belongs to the IPP isomerase type 2 family. In terms of assembly, homooctamer. Dimer of tetramers. It depends on FMN as a cofactor. NADPH serves as cofactor. Requires Mg(2+) as cofactor.

It localises to the cytoplasm. It carries out the reaction isopentenyl diphosphate = dimethylallyl diphosphate. Involved in the biosynthesis of isoprenoids. Catalyzes the 1,3-allylic rearrangement of the homoallylic substrate isopentenyl (IPP) to its allylic isomer, dimethylallyl diphosphate (DMAPP). This Streptococcus gordonii (strain Challis / ATCC 35105 / BCRC 15272 / CH1 / DL1 / V288) protein is Isopentenyl-diphosphate delta-isomerase.